We begin with the raw amino-acid sequence, 1466 residues long: Helicase ARIP4 (1466 aa).

2 disordered regions span residues 1-137 (MSDE…ERRK) and 185-235 (DSSS…THVN). Residues 11-49 (PDLDPDVELEDEEEEEEEEEVAVEEHDRDDEEGLLDDTS) show a composition bias toward acidic residues. A compositionally biased stretch (low complexity) spans 72–82 (TSTTSSQSEPS). The segment covering 99 to 114 (KKRAQKPSHMRRNIRK) has biased composition (basic residues). Glycyl lysine isopeptide (Lys-Gly) (interchain with G-Cter in SUMO2) cross-links involve residues K114 and K126. Residues 191 to 200 (EDEKSSRDEV) show a composition bias toward basic and acidic residues. Residue K271 forms a Glycyl lysine isopeptide (Lys-Gly) (interchain with G-Cter in SUMO2) linkage. In terms of domain architecture, Helicase ATP-binding spans 291–511 (RFKTSSGFGC…WCMVDFVRPD (221 aa)). ATP is bound at residue 304 to 311 (HSMGLGKT). Residues 462–465 (DEGH) carry the DEAH box motif. Residues 550 to 554 (LHSLL) carry the LXXLL motif 1 motif. A disordered region spans residues 649 to 670 (SAGTSARCPPHGTKVKGEDSAL). Residues K664, K681, K758, K900, K1013, and K1017 each participate in a glycyl lysine isopeptide (Lys-Gly) (interchain with G-Cter in SUMO2) cross-link. The Helicase C-terminal domain occupies 727 to 895 (HLIEESVKLG…RVVDDLNPML (169 aa)). 2 disordered regions span residues 1026 to 1045 (QSTP…GVSS) and 1120 to 1170 (ATGK…VSPD). A compositionally biased stretch (polar residues) spans 1135–1154 (SGSQGPSLASTSNGRHSASS). A phosphoserine mark is found at S1168 and S1171. Disordered stretches follow at residues 1184–1212 (VAAA…MDNS) and 1259–1281 (TPSV…APVQ). T1259 is subject to Phosphothreonine. The short motif at 1328 to 1332 (LSNLL) is the LXXLL motif 2 element. A disordered region spans residues 1444–1466 (AEVGFSSNDDEDKDDDVIEVTGK). Over residues 1451–1466 (NDDEDKDDDVIEVTGK) the composition is skewed to acidic residues.

It belongs to the SNF2/RAD54 helicase family. In terms of assembly, interacts with AR via its N-terminus. Interacts with DYRK1A. Binds DNA and mononucleosomes, but does not seem to form large multiprotein complexes. In terms of processing, sumoylated. In terms of tissue distribution, expressed at relatively low level, with highest expression in testis, liver and kidney. In brain, it is expressed in hippocampal and cerebellar neurons. In testis, it is present at high level in Sertoli cell nuclei. Also present in Leydig cell (at protein level).

The protein resides in the nucleus. It catalyses the reaction ATP + H2O = ADP + phosphate + H(+). Enzyme activity is enhanced by dsDNA (double-stranded DNA) and ssDNA (single-stranded DNA). Its function is as follows. DNA helicase that modulates androgen receptor (AR)-dependent transactivation in a promoter-dependent manner. Not able to remodel mononucleosomes in vitro. Acts as an AR-coregulator in Sertoli cells. The chain is Helicase ARIP4 (Rad54l2) from Mus musculus (Mouse).